Reading from the N-terminus, the 209-residue chain is MIRFITIPDFADYQVILKLMEDYVNKVISDHEPEIIYLVEHSEVYTAGTNYKQEELLNYGDIPVIYTGRGGKFTFHGPGQRVIYPILNLDSPNRHKDLKLYIKMLEEWIINSLNYFGIKAYIIKDKVGIWVKVRKDEFAKIAAIGVRVRKWVTYHGVAINISTDLSKFSGIIPCGLEDSLVTSLNQLGIHVEMSEFDKIIQTEFNKIFK.

The 180-residue stretch at 30-209 (DHEPEIIYLV…IQTEFNKIFK (180 aa)) folds into the BPL/LPL catalytic domain. Residues 69–76 (RGGKFTFH), 143–145 (AIG), and 156–158 (GVA) each bind substrate. Catalysis depends on Cys174, which acts as the Acyl-thioester intermediate.

Belongs to the LipB family.

The protein localises to the cytoplasm. It carries out the reaction octanoyl-[ACP] + L-lysyl-[protein] = N(6)-octanoyl-L-lysyl-[protein] + holo-[ACP] + H(+). It functions in the pathway protein modification; protein lipoylation via endogenous pathway; protein N(6)-(lipoyl)lysine from octanoyl-[acyl-carrier-protein]: step 1/2. In terms of biological role, catalyzes the transfer of endogenously produced octanoic acid from octanoyl-acyl-carrier-protein onto the lipoyl domains of lipoate-dependent enzymes. Lipoyl-ACP can also act as a substrate although octanoyl-ACP is likely to be the physiological substrate. This is Octanoyltransferase from Rickettsia peacockii (strain Rustic).